The following is a 119-amino-acid chain: Holo-[acyl-carrier-protein] synthase (119 aa).

Mg(2+) contacts are provided by aspartate 8 and glutamate 58.

Belongs to the P-Pant transferase superfamily. AcpS family. Mg(2+) serves as cofactor.

The protein resides in the cytoplasm. The catalysed reaction is apo-[ACP] + CoA = holo-[ACP] + adenosine 3',5'-bisphosphate + H(+). Its function is as follows. Transfers the 4'-phosphopantetheine moiety from coenzyme A to a Ser of acyl-carrier-protein. The polypeptide is Holo-[acyl-carrier-protein] synthase (Bacillus thuringiensis subsp. konkukian (strain 97-27)).